Consider the following 140-residue polypeptide: Nucleoside diphosphate kinase (140 aa).

ATP is bound by residues K11, F59, R87, T93, R104, and N114. The Pros-phosphohistidine intermediate role is filled by H117.

Belongs to the NDK family. Homotetramer. The cofactor is Mg(2+).

It is found in the cytoplasm. It carries out the reaction a 2'-deoxyribonucleoside 5'-diphosphate + ATP = a 2'-deoxyribonucleoside 5'-triphosphate + ADP. The enzyme catalyses a ribonucleoside 5'-diphosphate + ATP = a ribonucleoside 5'-triphosphate + ADP. Major role in the synthesis of nucleoside triphosphates other than ATP. The ATP gamma phosphate is transferred to the NDP beta phosphate via a ping-pong mechanism, using a phosphorylated active-site intermediate. This chain is Nucleoside diphosphate kinase, found in Azorhizobium caulinodans (strain ATCC 43989 / DSM 5975 / JCM 20966 / LMG 6465 / NBRC 14845 / NCIMB 13405 / ORS 571).